Consider the following 548-residue polypeptide: Chaperonin GroEL (548 aa).

ATP-binding positions include 30 to 33 (TLGP), Lys51, 87 to 91 (DGTTT), Gly415, and Asp495.

The protein belongs to the chaperonin (HSP60) family. In terms of assembly, forms a cylinder of 14 subunits composed of two heptameric rings stacked back-to-back. Interacts with the co-chaperonin GroES.

It localises to the cytoplasm. It catalyses the reaction ATP + H2O + a folded polypeptide = ADP + phosphate + an unfolded polypeptide.. Functionally, together with its co-chaperonin GroES, plays an essential role in assisting protein folding. The GroEL-GroES system forms a nano-cage that allows encapsulation of the non-native substrate proteins and provides a physical environment optimized to promote and accelerate protein folding. The protein is Chaperonin GroEL of Pseudoalteromonas atlantica (strain T6c / ATCC BAA-1087).